We begin with the raw amino-acid sequence, 292 residues long: 33 kDa chaperonin (292 aa).

Intrachain disulfides connect cysteine 230/cysteine 232 and cysteine 263/cysteine 266.

Belongs to the HSP33 family. Post-translationally, under oxidizing conditions two disulfide bonds are formed involving the reactive cysteines. Under reducing conditions zinc is bound to the reactive cysteines and the protein is inactive.

Its subcellular location is the cytoplasm. Its function is as follows. Redox regulated molecular chaperone. Protects both thermally unfolding and oxidatively damaged proteins from irreversible aggregation. Plays an important role in the bacterial defense system toward oxidative stress. In Shigella dysenteriae serotype 1 (strain Sd197), this protein is 33 kDa chaperonin.